The chain runs to 1055 residues: Protein SUPPRESSOR OF QUENCHING 1, chloroplastic (1055 aa).

Residues 1–56 (MALKLTSPPSVFSQSRRLSSSSLIPIRSKSTFTGFRSRTGVYLSKTTALQSSTKLS) constitute a chloroplast transit peptide. At V57 the chain carries N-acetylvaline. Residues 59 to 327 (AESPAATIAT…FQGSRRDILR (269 aa)) lie on the Stromal side of the membrane. The active-site Nucleophile is D80. Mg(2+) is bound by residues D80 and D82. D80 provides a ligand contact to substrate. The active-site Proton donor is the D82. Substrate-binding positions include E89, 118–122 (TGEAK), 141–144 (AKER), and 183–189 (SSADRIK). D242 lines the Mg(2+) pocket. A helical membrane pass occupies residues 328 to 345 (YGSLGIALSCVYFAATNW). At 346 to 1055 (KAMQYASPKA…AGGLQLQGTR (710 aa)) the chain is on the lumenal side. Positions 359–536 (ALVGAKSPSF…LDDVVAAALT (178 aa)) constitute a Thioredoxin domain. C431 and C434 are oxidised to a cystine. NHL repeat units lie at residues 565-597 (PLKFPGKLAIDTLNNRLFISDSNHNRIIVTDLE), 611-647 (GFQDGSFEDAAFNRPQGLAYNAKKNLLYVADTENHAL), 673-712 (GRKGTKQLLNSPWDVCFEPVNEKVYIAMAGQHQIWEYSVL), 802-832 (LQHPLGVLCANDGQIYLTDSYNHKIKKLDPV), and 854-887 (GAQLSEPAGLAITENGRLFVADTNNSLIRYIDLN).

This sequence in the N-terminal section; belongs to the HAD-like hydrolase superfamily. The protein in the C-terminal section; belongs to the thioredoxin family. The cofactor is Mg(2+).

It localises to the plastid. Its subcellular location is the chloroplast thylakoid membrane. In terms of biological role, required to maintain light harvesting efficiency, especially during nonphotochemical quenching (NPQ) recovery, via the regulation of chlorophyll excited-state lifetime probably by preventing the formation of a slowly reversible form of antenna quenching. This is Protein SUPPRESSOR OF QUENCHING 1, chloroplastic from Arabidopsis thaliana (Mouse-ear cress).